We begin with the raw amino-acid sequence, 348 residues long: NADH-ubiquinone oxidoreductase chain 2 (348 aa).

Helical transmembrane passes span 1 to 21, 23 to 43, 56 to 76, 92 to 112, 123 to 143, 148 to 168, 176 to 196, 198 to 218, 242 to 262, 272 to 292, and 321 to 341; these read MMTL…MFSS, WFFA…MMLF, YFIS…WNYF, ITLI…HFWL, MGLI…IQVS, NMYI…FGGL, LLAY…AVSA, LSWV…TILI, CILV…FLKL, SLIL…FFYL, and LLFN…PFMI.

Belongs to the complex I subunit 2 family.

It localises to the mitochondrion inner membrane. It catalyses the reaction a ubiquinone + NADH + 5 H(+)(in) = a ubiquinol + NAD(+) + 4 H(+)(out). Functionally, core subunit of the mitochondrial membrane respiratory chain NADH dehydrogenase (Complex I) that is believed to belong to the minimal assembly required for catalysis. Complex I functions in the transfer of electrons from NADH to the respiratory chain. The immediate electron acceptor for the enzyme is believed to be ubiquinone. This chain is NADH-ubiquinone oxidoreductase chain 2 (MT-ND2), found in Myxine glutinosa (Atlantic hagfish).